Reading from the N-terminus, the 137-residue chain is Small ribosomal subunit protein uS12 (137 aa).

Disordered stretches follow at residues 1–21 (MPTINQLVRKPRKSKIEKSDS) and 34–57 (VHTKLAAPQKRGVATRVGTMTPKK). Asp-102 carries the post-translational modification 3-methylthioaspartic acid.

The protein belongs to the universal ribosomal protein uS12 family. Part of the 30S ribosomal subunit. Contacts proteins S8 and S17. May interact with IF1 in the 30S initiation complex.

In terms of biological role, with S4 and S5 plays an important role in translational accuracy. Functionally, interacts with and stabilizes bases of the 16S rRNA that are involved in tRNA selection in the A site and with the mRNA backbone. Located at the interface of the 30S and 50S subunits, it traverses the body of the 30S subunit contacting proteins on the other side and probably holding the rRNA structure together. The combined cluster of proteins S8, S12 and S17 appears to hold together the shoulder and platform of the 30S subunit. This Streptococcus equi subsp. zooepidemicus (strain H70) protein is Small ribosomal subunit protein uS12.